A 556-amino-acid polypeptide reads, in one-letter code: CDP-diacylglycerol--glycerol-3-phosphate 3-phosphatidyltransferase, mitochondrial (556 aa).

Residues 1 to 28 (MAVAAAAAAGPVFWRRLLGLLPGRPGLA) constitute a mitochondrion transit peptide. Ser-49 carries the phosphoserine modification. 124–131 (ASLYLGTG) is a binding site for ATP. 2 PLD phosphodiesterase domains span residues 215–241 (TIGLQHIKVYLFDNSVILSGANLSDSY) and 460–493 (RGWTFHAKGLWLYLAGSSLPCLTLIGSPNFGYRS). Catalysis depends on residues His-220, Lys-222, and Asp-227.

This sequence belongs to the CDP-alcohol phosphatidyltransferase class-II family.

It localises to the mitochondrion. It carries out the reaction a CDP-1,2-diacyl-sn-glycerol + sn-glycerol 3-phosphate = a 1,2-diacyl-sn-glycero-3-phospho-(1'-sn-glycero-3'-phosphate) + CMP + H(+). It participates in phospholipid metabolism; phosphatidylglycerol biosynthesis; phosphatidylglycerol from CDP-diacylglycerol: step 1/2. Its activity is regulated as follows. Activated by calcium and magnesium and inhibited by other bivalent cations. Its function is as follows. Functions in the biosynthesis of the anionic phospholipids phosphatidylglycerol and cardiolipin. The chain is CDP-diacylglycerol--glycerol-3-phosphate 3-phosphatidyltransferase, mitochondrial (PGS1) from Pongo abelii (Sumatran orangutan).